Consider the following 526-residue polypeptide: Bifunctional purine biosynthesis protein PurH (526 aa).

Residues 15-161 (DVVPIRRALI…KNHANVAIVV (147 aa)) enclose the MGS-like domain.

This sequence belongs to the PurH family.

It catalyses the reaction (6R)-10-formyltetrahydrofolate + 5-amino-1-(5-phospho-beta-D-ribosyl)imidazole-4-carboxamide = 5-formamido-1-(5-phospho-D-ribosyl)imidazole-4-carboxamide + (6S)-5,6,7,8-tetrahydrofolate. The enzyme catalyses IMP + H2O = 5-formamido-1-(5-phospho-D-ribosyl)imidazole-4-carboxamide. It functions in the pathway purine metabolism; IMP biosynthesis via de novo pathway; 5-formamido-1-(5-phospho-D-ribosyl)imidazole-4-carboxamide from 5-amino-1-(5-phospho-D-ribosyl)imidazole-4-carboxamide (10-formyl THF route): step 1/1. It participates in purine metabolism; IMP biosynthesis via de novo pathway; IMP from 5-formamido-1-(5-phospho-D-ribosyl)imidazole-4-carboxamide: step 1/1. The sequence is that of Bifunctional purine biosynthesis protein PurH from Leifsonia xyli subsp. xyli (strain CTCB07).